The primary structure comprises 1257 residues: Pesticidal crystal protein Cry12Aa (1257 aa).

It belongs to the delta endotoxin family.

Functionally, endotoxin with nematicidal activity. The protein is Pesticidal crystal protein Cry12Aa (cry12Aa) of Bacillus thuringiensis.